The chain runs to 222 residues: Cytidylate kinase 2 (222 aa).

ATP is bound at residue 7–15 (GPSGAGKGT).

This sequence belongs to the cytidylate kinase family. Type 1 subfamily.

The protein localises to the cytoplasm. It carries out the reaction CMP + ATP = CDP + ADP. The enzyme catalyses dCMP + ATP = dCDP + ADP. The polypeptide is Cytidylate kinase 2 (Haemophilus influenzae (strain ATCC 51907 / DSM 11121 / KW20 / Rd)).